The following is a 41-amino-acid chain: Peptide Hact-SCRiP1 (41 aa).

4 disulfides stabilise this stretch: Cys5–Cys37, Cys12–Cys31, Cys19–Cys38, and Cys26–Cys39.

In terms of tissue distribution, expressed in tentacles.

The protein localises to the nematocyst. It is found in the secreted. In terms of biological role, peptide with unknown function. Does not exhibit any effect on human ion channel TRPV1 in a Xenopus laevis oocytes assay. This Heliofungia actiniformis (Mushroom coral) protein is Peptide Hact-SCRiP1.